The primary structure comprises 281 residues: MAFRGRRPELRGPPELYYDKNEARKYVRNSRMIDVQIKMTGRALELLCVPEDKPCYVLDIGCGTGLSGDYLSDEGHYWVGIDISPAMLDEALDRETQGDVILGDMGQGIPFKPGTFDACISISAVQWLCNANKKSDIPAKRLYCFFSSLYSVLVRGGRAVLQLYPENSEQLELITTQATRAGFTGGVVVDYPNSAKAKKFYLCLFSGPSTSLPEGLSEDTEEEKPAESTFTADRIPYRIARRGVVRKSREWVLEKKARRRRQGKEVCPDTQYTGRKRKPRF.

The interval 256-281 is disordered; it reads KARRRRQGKEVCPDTQYTGRKRKPRF.

It belongs to the class I-like SAM-binding methyltransferase superfamily. BUD23/WBSCR22 family. Heterodimer with TRMT112; this heterodimerization is necessary for the metabolic stability and activity of the catalytic subunit BUD23. Interacts with GRIP1. May be ubiquitinated and targeted to degradation in response to pro-inflammatory cytokine signaling.

It localises to the nucleus. The protein localises to the nucleoplasm. It is found in the cytoplasm. Its subcellular location is the perinuclear region. The catalysed reaction is a guanosine in 18S rRNA + S-adenosyl-L-methionine = an N(7)-methylguanosine in 18S rRNA + S-adenosyl-L-homocysteine. S-adenosyl-L-methionine-dependent methyltransferase that specifically methylates the N(7) position of a guanine in 18S rRNA. Requires the methyltransferase adapter protein TRM112 for full rRNA methyltransferase activity. Involved in the pre-rRNA processing steps leading to small-subunit rRNA production independently of its RNA-modifying catalytic activity. Important for biogenesis end export of the 40S ribosomal subunit independent on its methyltransferase activity. Locus-specific steroid receptor coactivator. Potentiates transactivation by glucocorticoid (NR3C1), mineralocorticoid (NR3C2), androgen (AR) and progesterone (PGR) receptors. Required for the maintenance of open chromatin at the TSC22D3/GILZ locus to facilitate NR3C1 loading on the response elements. Required for maintenance of dimethylation on histone H3 'Lys-79' (H3K79me2), although direct histone methyltransferase activity is not observed in vitro. In Bos taurus (Bovine), this protein is 18S rRNA (guanine-N(7))-methyltransferase.